Reading from the N-terminus, the 133-residue chain is Thioredoxin-like protein CXXS1 (133 aa).

In terms of domain architecture, Thioredoxin spans 1–120 (MEIQQQKGVG…VKKMVDASAE (120 aa)).

It belongs to the thioredoxin family.

The polypeptide is Thioredoxin-like protein CXXS1 (Oryza sativa subsp. japonica (Rice)).